The sequence spans 239 residues: Mannose-P-dolichol utilization defect 1 protein homolog 1 (239 aa).

Helical transmembrane passes span 25-45, 62-82, 91-111, 123-143, 174-194, and 202-222; these read CLLPLISKLLGYFLVAASMTV, LSVVAFELEVIGYTISLAYCL, FGELAFLLIQALILVACIYYF, AILYFAIAPTVFAGKIDPFLF, LSFLTCLMNFGGALARVFTSI, and MLLGIVLSIFTNGIIMSQILL. Residues 27-93 enclose the PQ-loop 1 domain; sequence LPLISKLLGY…KDLPFSAFGE (67 aa). Residues 150–205 form the PQ-loop 2 domain; the sequence is KHLIFLSARIPQIWKNFRNKSTGQLSFLTCLMNFGGALARVFTSIQEKAPLSMLLG.

The protein belongs to the MPDU1 (TC 2.A.43.3) family.

It is found in the membrane. The chain is Mannose-P-dolichol utilization defect 1 protein homolog 1 from Arabidopsis thaliana (Mouse-ear cress).